The sequence spans 126 residues: Small ribosomal subunit protein uS13 (126 aa).

Positions 99 to 126 (LRGQSTKNNARTRKGKKKTVANKKKATK) are disordered. A compositionally biased stretch (basic residues) spans 108 to 126 (ARTRKGKKKTVANKKKATK).

The protein belongs to the universal ribosomal protein uS13 family. Part of the 30S ribosomal subunit. Forms a loose heterodimer with protein S19. Forms two bridges to the 50S subunit in the 70S ribosome.

In terms of biological role, located at the top of the head of the 30S subunit, it contacts several helices of the 16S rRNA. In the 70S ribosome it contacts the 23S rRNA (bridge B1a) and protein L5 of the 50S subunit (bridge B1b), connecting the 2 subunits; these bridges are implicated in subunit movement. Contacts the tRNAs in the A and P-sites. This Porphyromonas gingivalis (strain ATCC 33277 / DSM 20709 / CIP 103683 / JCM 12257 / NCTC 11834 / 2561) protein is Small ribosomal subunit protein uS13.